The sequence spans 484 residues: UDP-N-acetylmuramate--L-alanine ligase (484 aa).

G125–T131 serves as a coordination point for ATP.

It belongs to the MurCDEF family.

The protein localises to the cytoplasm. The enzyme catalyses UDP-N-acetyl-alpha-D-muramate + L-alanine + ATP = UDP-N-acetyl-alpha-D-muramoyl-L-alanine + ADP + phosphate + H(+). Its pathway is cell wall biogenesis; peptidoglycan biosynthesis. Cell wall formation. The protein is UDP-N-acetylmuramate--L-alanine ligase of Buchnera aphidicola subsp. Acyrthosiphon pisum (strain Tuc7).